A 429-amino-acid polypeptide reads, in one-letter code: MRVLILGSGVIGVTSAWYLAQAGCEVTVVDRQPAAALETSYANAGQLSFGYTSPWAAPGVPGKAVKWLFEQHAPLSIRPTRDLRQLAWLSQMLRNCTAERYAVNKARMVRMSDYSRDCLNALRAETGIEFEGRQLGTTQLFRTQQQLDAAAQDIEVLAQYGVPYELLSPAQIAQFEPGLAGGGAQMAGALRLPEDQTGDCRLFTQRLAELATQAGVTFRYGQQIERLEHAGGQITGVQIDGRIETADRYVLALGSYSADVLLSLGLHLPVYPLKGYSLTIPIVDAQRAPTSTVLDESYKIALTRFDDRIRVGGMAEVAGFDMSLNPRRRATLEMVVNDLFPGGGDLAQAEFWTGLRPATPDGTPVVGATPYANLFLNTGHGTLGWTMACGSGRYLADLMQGRTPEIDTEGLDVFRYLSPRSVRPHREAA.

3 to 17 (VLILGSGVIGVTSAW) lines the FAD pocket.

It belongs to the DadA oxidoreductase family. It depends on FAD as a cofactor.

It catalyses the reaction a D-alpha-amino acid + A + H2O = a 2-oxocarboxylate + AH2 + NH4(+). In terms of biological role, oxidative deamination of D-amino acids. This is D-amino acid dehydrogenase from Xanthomonas axonopodis pv. citri (strain 306).